We begin with the raw amino-acid sequence, 357 residues long: Protein NDRG2 (357 aa).

Positions 1–14 (MAELREVQITEEKP) are enriched in basic and acidic residues. The interval 1 to 26 (MAELREVQITEEKPLLPGQTPEVAKT) is disordered. At Ala-2 the chain carries N-acetylalanine. Thr-20 carries the post-translational modification Phosphothreonine. A phosphoserine mark is found at Ser-312 and Ser-314. The residue at position 316 (Thr-316) is a Phosphothreonine. A Phosphoserine modification is found at Ser-318. Position 320 is a phosphothreonine (Thr-320). The segment at 320-357 (TSAASIDGNRSRSRTLSQSSESGTLSSGPPGHTMEVSC) is disordered. A phosphoserine mark is found at Ser-321, Ser-324, and Ser-330. Over residues 333 to 347 (RTLSQSSESGTLSSG) the composition is skewed to low complexity. Thr-334 bears the Phosphothreonine mark. Ser-336, Ser-338, Ser-339, and Ser-341 each carry phosphoserine. Position 343 is a phosphothreonine (Thr-343). At Ser-356 the chain carries Phosphoserine.

Belongs to the NDRG family. Interacts with CTNNB1.

It is found in the cytoplasm. The protein localises to the perinuclear region. The protein resides in the cell projection. Its subcellular location is the growth cone. In terms of biological role, contributes to the regulation of the Wnt signaling pathway. Down-regulates CTNNB1-mediated transcriptional activation of target genes, such as CCND1, and may thereby act as tumor suppressor. May be involved in dendritic cell and neuron differentiation. This is Protein NDRG2 (NDRG2) from Bos taurus (Bovine).